A 390-amino-acid chain; its full sequence is Chorismate synthase (390 aa).

Arg48 is an NADP(+) binding site. FMN is bound by residues 126-128, Gly286, 301-305, and Arg328; these read RAS and KPTSS.

Belongs to the chorismate synthase family. FMNH2 is required as a cofactor.

It carries out the reaction 5-O-(1-carboxyvinyl)-3-phosphoshikimate = chorismate + phosphate. It functions in the pathway metabolic intermediate biosynthesis; chorismate biosynthesis; chorismate from D-erythrose 4-phosphate and phosphoenolpyruvate: step 7/7. Its function is as follows. Catalyzes the anti-1,4-elimination of the C-3 phosphate and the C-6 proR hydrogen from 5-enolpyruvylshikimate-3-phosphate (EPSP) to yield chorismate, which is the branch point compound that serves as the starting substrate for the three terminal pathways of aromatic amino acid biosynthesis. This reaction introduces a second double bond into the aromatic ring system. The polypeptide is Chorismate synthase (Sulfurisphaera tokodaii (strain DSM 16993 / JCM 10545 / NBRC 100140 / 7) (Sulfolobus tokodaii)).